A 61-amino-acid polypeptide reads, in one-letter code: MICYKQRSLQFPITTVCPGEKNCYKKQWSGHRGTIIERGCGCPSVKKGIEINCCTTDKCNR.

Cystine bridges form between Cys3–Cys23, Cys17–Cys40, Cys42–Cys53, and Cys54–Cys59.

It belongs to the three-finger toxin family. Short-chain subfamily. Type I alpha-neurotoxin sub-subfamily. In terms of tissue distribution, expressed by the venom gland.

It is found in the secreted. Its function is as follows. Binds to muscle nicotinic acetylcholine receptor (nAChR) and inhibit acetylcholine from binding to the receptor, thereby impairing neuromuscular transmission. This Naja annulifera (Banded Egyptian cobra) protein is Short neurotoxin 4.